The following is a 127-amino-acid chain: Fluoride-specific ion channel FluC (127 aa).

4 helical membrane-spanning segments follow: residues 4–24, 35–55, 71–91, and 103–123; these read LLLA…MLSM, LGTL…FAWF, TGFC…VFLL, and VLVN…IFSA. The Na(+) site is built by Gly-75 and Thr-78.

It belongs to the fluoride channel Fluc/FEX (TC 1.A.43) family.

It localises to the cell inner membrane. The catalysed reaction is fluoride(in) = fluoride(out). Na(+) is not transported, but it plays an essential structural role and its presence is essential for fluoride channel function. Fluoride-specific ion channel. Important for reducing fluoride concentration in the cell, thus reducing its toxicity. This is Fluoride-specific ion channel FluC from Escherichia fergusonii (strain ATCC 35469 / DSM 13698 / CCUG 18766 / IAM 14443 / JCM 21226 / LMG 7866 / NBRC 102419 / NCTC 12128 / CDC 0568-73).